Here is a 286-residue protein sequence, read N- to C-terminus: Release factor glutamine methyltransferase (286 aa).

S-adenosyl-L-methionine contacts are provided by residues 120–124 (GTGSG), Asp-143, Trp-172, and Asn-187. 187-190 (NPPY) contributes to the substrate binding site.

Belongs to the protein N5-glutamine methyltransferase family. PrmC subfamily.

It carries out the reaction L-glutaminyl-[peptide chain release factor] + S-adenosyl-L-methionine = N(5)-methyl-L-glutaminyl-[peptide chain release factor] + S-adenosyl-L-homocysteine + H(+). In terms of biological role, methylates the class 1 translation termination release factors RF1/PrfA and RF2/PrfB on the glutamine residue of the universally conserved GGQ motif. This is Release factor glutamine methyltransferase from Gloeobacter violaceus (strain ATCC 29082 / PCC 7421).